The following is a 447-amino-acid chain: MSDRKYFGTDGIRGKVGENLINPEFVMKLGWAAGKVLAGSGTNKVIIGKDTRISGYMLESALESGLSAAGINIGLLGPMPTPAIAYLTKTFRSEAGIVISASHNPYYDNGIKFFSADGSKLDDDIELAIEAEMDKPMQCVASDKLGKAVRIADAAGRYIEFCKGNFPSNLSLKGLKIVVDCAHGATYHIAPNVLSELGAEVIEIGTEPDGLNINRKVGATSMKAIVDSVIKHKADLGFALDGDGDRIMLVDHHGNVIDGDQIVYIIARDALKSGKLKGGVVGTVMSNLGLEVALSTLGVPFERSKVGDRYVLELLRQKGWSIGGEGSGHVLNLDAASTGDGIVAGLQVLAAMLNANMTLNELSRGMTKFPQTLINVRFNEGDTPLDAQDVKNSVLEAESALGERGRVLLRKSGTEPLIRVMVEANDATDSRKWAEHIADAVRKATGQ.

Ser102 functions as the Phosphoserine intermediate in the catalytic mechanism. Mg(2+) contacts are provided by Ser102, Asp241, Asp243, and Asp245. Ser102 is modified (phosphoserine).

Belongs to the phosphohexose mutase family. Requires Mg(2+) as cofactor. Post-translationally, activated by phosphorylation.

It catalyses the reaction alpha-D-glucosamine 1-phosphate = D-glucosamine 6-phosphate. In terms of biological role, catalyzes the conversion of glucosamine-6-phosphate to glucosamine-1-phosphate. This Pseudoalteromonas atlantica (strain T6c / ATCC BAA-1087) protein is Phosphoglucosamine mutase.